Here is a 93-residue protein sequence, read N- to C-terminus: Transcription factor RADIALIS (93 aa).

Positions 6-61 constitute an SANT domain; the sequence is GSGRPWSAKENKAFERALAVYDKDTPDRWANVARAVEGRTPEEVKKHYEILVEDIK.

In terms of tissue distribution, specifically expressed in the dorsal region of developing flowers.

It is found in the nucleus. Functionally, involved in the dorsovental asymmetry of flowers. Promotes dorsal identity. The sequence is that of Transcription factor RADIALIS (RAD) from Antirrhinum majus (Garden snapdragon).